The sequence spans 122 residues: HLMQFETLIMKVAGRSGVWYYGSYGCFCGAGGQGRPQDASDRCCFVHDCCYGKVNGCDPKKDFYTYSEENGDIVCGGDDPCKKEICECDKDAAICFRDNKDTYDNKYWFFPAKNCQEESEPC.

7 disulfides stabilise this stretch: C26–C115, C28–C44, C43–C95, C49–C122, C50–C88, C57–C81, and C75–C86. Positions 27, 29, and 31 each coordinate Ca(2+). The active site involves H47. D48 is a binding site for Ca(2+). Residue D89 is part of the active site.

This sequence belongs to the phospholipase A2 family. Group II subfamily. D49 sub-subfamily. Ca(2+) serves as cofactor. As to expression, expressed by the venom gland.

Its subcellular location is the secreted. The enzyme catalyses a 1,2-diacyl-sn-glycero-3-phosphocholine + H2O = a 1-acyl-sn-glycero-3-phosphocholine + a fatty acid + H(+). In terms of biological role, snake venom phospholipase A2 (PLA2) that has high lipolytic activity. PLA2 catalyzes the calcium-dependent hydrolysis of the 2-acyl groups in 3-sn-phosphoglycerides. The polypeptide is Acidic phospholipase A2 4 (Craspedocephalus gramineus (Bamboo pit viper)).